The chain runs to 274 residues: SPbeta prophage-derived UPF0714 protein YoqZ (274 aa).

The protein belongs to the UPF0714 family.

The chain is SPbeta prophage-derived UPF0714 protein YoqZ (yoqZ) from Bacillus subtilis (strain 168).